We begin with the raw amino-acid sequence, 462 residues long: Cell wall mannoprotein 1 (462 aa).

Positions 1-18 (MKFLSSLVVLGLSAQALA) are cleaved as a signal peptide. A hexadecanoate-binding site is contributed by S313. A disordered region spans residues 346–429 (FAGTGPAPTT…SVPAAPTGGN (84 aa)). Positions 347–366 (AGTGPAPTTSSTPEASTAPA) are enriched in low complexity. Polar residues predominate over residues 399–420 (VWPTSTTASPDVQPTITSSGTS).

The protein belongs to the cell wall mannoprotein 1 family. As to quaternary structure, monomer. Mannoprotein, glycosylated.

The protein localises to the secreted. Its subcellular location is the cell wall. Its function is as follows. Constitutive protein of the cell wall. Binds fatty acids and may thus serve as a fatty acid transporter between P.marneffei and host cells during infection. Abundant antigen target of host humoral immune response. In Talaromyces marneffei (Penicillium marneffei), this protein is Cell wall mannoprotein 1.